Reading from the N-terminus, the 435-residue chain is MEMEKEFEQIDKSGSWAAIYQDIRHEASDFPCRVAKLPKNKNRNRYRDVSPFDHSRIKLHQEDNDYINASLIKMEEAQRSYILTQGPLPNTCGHFWEMVWEQKSRGVVMLNRVMEKGSLKCAQYWPQKEEKEMIFEDTNLKLTLISEDIKSYYTVRQLELENLTTQETREILHFHYTTWPDFGVPESPASFLNFLFKVRESGSLSPEHGPVVVHCSAGIGRSGTFCLADTCLLLMDKRKDPSSVDIKKVLLEMRKFRMGLIQTADQLRFSYLAVIEGAKFIMGDSSVQDQWKELSHEDLEPPPEHIPPPPRPPKRILEPHNGKCREFFPNHQWVKEETQEDKDCPIKEEKGSPLNAAPYGIESMSQDTEVRSRVVGGSLRGAQAASPAKGEPSLPEKDEDHALSYWKPFLVNMCVATVLTAGAYLCYRFLFNSNT.

Residue Met1 is modified to N-acetylmethionine. One can recognise a Tyrosine-protein phosphatase domain in the interval 3-277 (MEKEFEQIDK…RFSYLAVIEG (275 aa)). At Tyr20 the chain carries Phosphotyrosine. At Ser50 the chain carries Phosphoserine; by PKB/AKT1, CLK1 and CLK2. Phosphotyrosine; by EGFR is present on Tyr66. Substrate contacts are provided by residues Asp181 and 215–221 (CSAGIGR). Cys215 serves as the catalytic Phosphocysteine intermediate. Cys215 is subject to Cysteine persulfide; alternate. Cys215 carries the post-translational modification Cysteine sulfenic acid (-SOH); alternate. Residue Cys215 is modified to Cysteine sulfinic acid (-SO2H); alternate. The residue at position 215 (Cys215) is an S-nitrosocysteine; in reversibly inhibited form. The segment at residues 215–216 (CS) is a cross-link (n,N-(cysteine-1,S-diyl)serine (Cys-Ser); in inhibited form). Phosphoserine; by CLK1 and CLK2 is present on residues Ser242 and Ser243. Gln262 serves as a coordination point for substrate. The segment covering 338-351 (TQEDKDCPIKEEKG) has biased composition (basic and acidic residues). The segment at 338–359 (TQEDKDCPIKEEKGSPLNAAPY) is disordered. Phosphoserine is present on residues Ser352, Ser363, and Ser365. Thr368 carries the phosphothreonine modification. Ser378 is subject to Phosphoserine; by PKC. Residues 378–398 (SLRGAQAASPAKGEPSLPEKD) form a disordered region. Ser386 carries the phosphoserine; by CDK1 modification.

It belongs to the protein-tyrosine phosphatase family. Non-receptor class 1 subfamily. As to quaternary structure, interacts with EPHA3 (phosphorylated); dephosphorylates EPHA3 and may regulate its trafficking and function. Interacts with MET. Interacts with NCK1. Oxidized on Cys-215; the Cys-SOH formed in response to redox signaling reacts with the alpha-amido of the following residue to form a sulfenamide cross-link, triggering a conformational change that inhibits substrate binding and activity. The active site can be restored by reduction. Post-translationally, ser-50 is the major site of phosphorylation as compared to Ser-242 and Ser-243. Activated by phosphorylation at Ser-50. In terms of processing, S-nitrosylation of Cys-215 inactivates the enzyme activity. Sulfhydration at Cys-215 following endoplasmic reticulum stress inactivates the enzyme activity, promoting EIF2AK3/PERK activity. As to expression, expressed in keratinocytes (at protein level).

The protein localises to the endoplasmic reticulum membrane. It carries out the reaction O-phospho-L-tyrosyl-[protein] + H2O = L-tyrosyl-[protein] + phosphate. Its function is as follows. Tyrosine-protein phosphatase which acts as a regulator of endoplasmic reticulum unfolded protein response. Mediates dephosphorylation of EIF2AK3/PERK; inactivating the protein kinase activity of EIF2AK3/PERK. May play an important role in CKII- and p60c-src-induced signal transduction cascades. May regulate the EFNA5-EPHA3 signaling pathway which modulates cell reorganization and cell-cell repulsion. May also regulate the hepatocyte growth factor receptor signaling pathway through dephosphorylation of MET. This chain is Tyrosine-protein phosphatase non-receptor type 1 (PTPN1), found in Homo sapiens (Human).